A 332-amino-acid chain; its full sequence is L-lactate dehydrogenase A chain (332 aa).

Residues 29 to 57 (GMVG…MEDK) and arginine 99 each bind NAD(+). Substrate contacts are provided by arginine 106, asparagine 138, and arginine 169. Asparagine 138 serves as a coordination point for NAD(+). Histidine 193 serves as the catalytic Proton acceptor. Substrate is bound at residue threonine 248.

The protein belongs to the LDH/MDH superfamily. LDH family. In terms of assembly, homotetramer.

Its subcellular location is the cytoplasm. The catalysed reaction is (S)-lactate + NAD(+) = pyruvate + NADH + H(+). It functions in the pathway fermentation; pyruvate fermentation to lactate; (S)-lactate from pyruvate: step 1/1. Interconverts simultaneously and stereospecifically pyruvate and lactate with concomitant interconversion of NADH and NAD(+). This is L-lactate dehydrogenase A chain (ldha) from Sphyraena lucasana (Lucas barracuda).